The sequence spans 66 residues: MNAHVLLLCTILFLLVHTPPVLGGMKEKCVTMGGYCRKQCRVQDALSGYCRNENPCCVRRVLMEDG.

A signal peptide spans 1 to 23; that stretch reads MNAHVLLLCTILFLLVHTPPVLG. 3 cysteine pairs are disulfide-bonded: Cys29–Cys56, Cys36–Cys50, and Cys40–Cys57. Positions 61 to 66 are excised as a propeptide; the sequence is VLMEDG.

This sequence belongs to the beta-defensin family. As to expression, expressed at low levels in kidney, lung, and spleen.

Its subcellular location is the secreted. Its function is as follows. Has bactericidal activity. May act as a ligand for C-C chemokine receptor CCR6. Positively regulates the sperm motility and bactericidal activity in a CCR6-dependent manner. Binds to CCR6 and triggers Ca2+ mobilization in the sperm which is important for its motility. The protein is Defensin-B1 of Ornithorhynchus anatinus (Duckbill platypus).